The primary structure comprises 99 residues: MYIVMNSNFCAIYKSMSKEGMFLYIAQRDKFNAVPEQLLQMFGKPQFVMLFNLAGEKPLKQVNNQDVLLAIKTQGFFLQISPPAENLLKQFLIQKGEKK.

The 85-residue stretch at 8 to 92 folds into the YcgL domain; that stretch reads NFCAIYKSMS…PAENLLKQFL (85 aa).

In Haemophilus ducreyi (strain 35000HP / ATCC 700724), this protein is YcgL domain-containing protein HD_1373.